We begin with the raw amino-acid sequence, 515 residues long: Anterior pharynx in excess protein 1 (515 aa).

An N-terminal signal peptide occupies residues 1–26; it reads MTNFSSLLTTIFLCIISSATGSGTIE. Topologically, residues 27–392 are extracellular; that stretch reads LLISSPQTVL…QASDELQLRL (366 aa). Asparagine 123 is a glycosylation site (N-linked (GlcNAc...) asparagine). The 43-residue stretch at 130 to 172 folds into the DSL domain; it reads NLCSSNYHGKRCNRYCIANAKLHWECSTHGVRRCSAGWSGEDC. 14 cysteine pairs are disulfide-bonded: cysteine 132–cysteine 141, cysteine 145–cysteine 155, cysteine 163–cysteine 172, cysteine 177–cysteine 187, cysteine 181–cysteine 193, cysteine 195–cysteine 204, cysteine 213–cysteine 218, cysteine 228–cysteine 237, cysteine 244–cysteine 256, cysteine 250–cysteine 268, cysteine 270–cysteine 279, cysteine 288–cysteine 300, cysteine 294–cysteine 310, and cysteine 312–cysteine 321. EGF-like domains lie at 173 to 205, 203 to 238, 240 to 280, and 284 to 322; these read SNPICAGGCSNRGRCVAPNQCSCADGFNGTRCE, RCEQCLPRAGCVNGDCVNETPNTCKCRDGFIGDRCD, DIKI…SQCK, and SKVRCSAEHVCKNGGACISMDDTNIQCKCRRGFSGKFCE. Asparagine 200 carries N-linked (GlcNAc...) asparagine glycosylation. Residues 325-349 form the EGF-like 5; incomplete domain; it reads NHGDCSAMRCSAGETCQISGDFAIC. A helical membrane pass occupies residues 393–413; sequence IAAICVLFSVCVIGLALVSFF. Over 414 to 515 the chain is Cytoplasmic; that stretch reads FYMHSFSKWK…AADDESSFRV (102 aa). Disordered stretches follow at residues 427 to 452 and 466 to 494; these read SQQAGGSTILPTTTSIPMSTTSSGTG and RGNAPGSSSDSEPDHHCPPPHRHSPPPAY. Positions 431-452 are enriched in low complexity; that stretch reads GGSTILPTTTSIPMSTTSSGTG.

It is found in the cell membrane. The protein localises to the nucleus. Its subcellular location is the cytoplasm. In terms of biological role, probable ligand for lin-12/Notch and glp-1/Notch receptors and involved in the mediation of Notch signaling. Involved in the lin-12/Notch pathway signaling of cell fate in vulval precursor cells (VPCs), acting redundantly with dsl-1 and lag-2. Contributes to the establishment of the dorsal-ventral axis in early embryos. Involved in the specification of the blastomere cell ABp fate, probably acting as a signal from the P2 blastomere to the glp-1/Notch receptor on ABp and ABa. Probably acts as a signal, from the secondary vulval epithelial cells and the vulval muscle type 1 (vm1) cells, to activate the lin-12/Notch pathway in type 2 vulval muscle (vm2) cells, contributing to formation of the postsynaptic muscle plasma membrane extensions, known as muscle arms. Required for oocyte growth control, acting redundantly with lag-2, perhaps signaling via the glp-1/Notch pathway. Plays a somatic role in ovulation during adulthood, perhaps via lin-12/Notch signaling. Involved in establishing left-right asymmetry during intestinal organogenesis. The polypeptide is Anterior pharynx in excess protein 1 (apx-1) (Caenorhabditis elegans).